The following is a 153-amino-acid chain: MVVKAVCVINGDAKGTVFFEQESSGTPVKVSGEVCGLAKGLHGFHVHEFGDNTNGCMSSGPHFNPYGKEHGAPVDENRHLGDLGNIEATGDCPTKVNITDSKITLFGADSIIGRTVVVHADADDLGQGGHELSKSTGNAGARIGCGVIGIAKV.

Cu cation contacts are provided by H45 and H47. Residue T53 is modified to Phosphothreonine. A disulfide bond links C56 and C145. A Phosphoserine modification is found at S59. A Cu cation-binding site is contributed by H62. Zn(2+) is bound by residues H62, H70, H79, and D82. H119 serves as a coordination point for Cu cation.

Belongs to the Cu-Zn superoxide dismutase family. Homodimer. Cu cation is required as a cofactor. It depends on Zn(2+) as a cofactor.

It is found in the cytoplasm. It catalyses the reaction 2 superoxide + 2 H(+) = H2O2 + O2. Functionally, destroys radicals which are normally produced within the cells and which are toxic to biological systems. The sequence is that of Superoxide dismutase [Cu-Zn] from Drosophila melanogaster (Fruit fly).